A 1529-amino-acid chain; its full sequence is ABC multidrug transporter AFR2 (1529 aa).

The ABC transporter 1 domain maps to 144–394; that stretch reads GSLRDLIGNR…FVDMGFHCPS (251 aa). N235 and N318 each carry an N-linked (GlcNAc...) asparagine glycan. Transmembrane regions (helical) follow at residues 510 to 530, 539 to 559, 589 to 609, 614 to 634, and 648 to 668; these read LFGNFIMALIIGSVFYNLPVT, ALLFFAILMSAFGSALEILIL, IPYKVMNCIIFNLTLYFMTNL, GAYFFFMLISFTLTMVMSMLF, and LAPAALLILGLVMYTGFAVNV. A glycan (N-linked (GlcNAc...) asparagine) is linked at N742. The helical transmembrane segment at 757–777 threads the bilayer; it reads GILIGFFLFFTAIYLTATEFI. The ABC transporter 2 domain maps to 845–1087; sequence FSWKDVVYDI…ILIDYFEKNG (243 aa). 881 to 888 is a binding site for ATP; sequence GVSGAGKT. The next 5 helical transmembrane spans lie at 1193 to 1213, 1229 to 1249, 1268 to 1288, 1314 to 1334, and 1353 to 1373; these read YIWAKVALCSLSGLFIGFSFF, VFMMFTIFGQLTQQIMPNFVT, IFILSNIVSEIPWAILMGVII, LMFLYIEMFLLFNATFSIMIV, and MCLIFCGVLASGSSLPGFWVF. A glycan (N-linked (GlcNAc...) asparagine) is linked at N1434. The helical transmembrane segment at 1465 to 1485 threads the bilayer; sequence FGLLWVYVVFNVIAAIGIYWL. Residues 1493 to 1505 show a composition bias toward basic and acidic residues; sequence GKERASEPEDVQE. Residues 1493–1529 form a disordered region; that stretch reads GKERASEPEDVQEKQVPAQSTEKKYQSISRSSESTVA. Residues 1518-1529 show a composition bias toward polar residues; the sequence is QSISRSSESTVA.

It belongs to the ABC transporter superfamily. ABCG family. PDR (TC 3.A.1.205) subfamily.

It localises to the cell membrane. It catalyses the reaction itraconazole(in) + ATP + H2O = itraconazole(out) + ADP + phosphate + H(+). The enzyme catalyses voriconazole(in) + ATP + H2O = voriconazole(out) + ADP + phosphate + H(+). It carries out the reaction fluconazole(in) + ATP + H2O = fluconazole(out) + ADP + phosphate + H(+). Pleiotropic ABC efflux transporter that confers resistance to structurally and functionally unrelated compounds including azoles such as fluconazole (FLC), itraconazole (ITC), posaconazole (POS), and voriconazole (VRC). The sequence is that of ABC multidrug transporter AFR2 from Cryptococcus deuterogattii (strain R265) (Cryptococcus gattii VGII (strain R265)).